The following is a 216-amino-acid chain: Protein-L-isoaspartate O-methyltransferase (216 aa).

Residue Ser-66 is part of the active site.

Belongs to the methyltransferase superfamily. L-isoaspartyl/D-aspartyl protein methyltransferase family.

The protein resides in the cytoplasm. It carries out the reaction [protein]-L-isoaspartate + S-adenosyl-L-methionine = [protein]-L-isoaspartate alpha-methyl ester + S-adenosyl-L-homocysteine. Its function is as follows. Catalyzes the methyl esterification of L-isoaspartyl residues in peptides and proteins that result from spontaneous decomposition of normal L-aspartyl and L-asparaginyl residues. It plays a role in the repair and/or degradation of damaged proteins. The polypeptide is Protein-L-isoaspartate O-methyltransferase (Colwellia psychrerythraea (strain 34H / ATCC BAA-681) (Vibrio psychroerythus)).